The chain runs to 447 residues: 23S rRNA (uracil(1939)-C(5))-methyltransferase RlmD (447 aa).

In terms of domain architecture, TRAM spans 7 to 66; it reads RKPLSQEPQKASIEALTHEGRGIAHVAGKTVFIDGALPGETVWFHYLRRRGKFDEGRVLE. [4Fe-4S] cluster-binding residues include cysteine 79, cysteine 85, cysteine 88, and cysteine 168. The S-adenosyl-L-methionine site is built by glutamine 275, phenylalanine 304, asparagine 309, glutamate 325, aspartate 352, and aspartate 374. The active-site Nucleophile is cysteine 400.

Belongs to the class I-like SAM-binding methyltransferase superfamily. RNA M5U methyltransferase family. RlmD subfamily.

It carries out the reaction uridine(1939) in 23S rRNA + S-adenosyl-L-methionine = 5-methyluridine(1939) in 23S rRNA + S-adenosyl-L-homocysteine + H(+). Functionally, catalyzes the formation of 5-methyl-uridine at position 1939 (m5U1939) in 23S rRNA. In Nitrosococcus oceani (strain ATCC 19707 / BCRC 17464 / JCM 30415 / NCIMB 11848 / C-107), this protein is 23S rRNA (uracil(1939)-C(5))-methyltransferase RlmD.